We begin with the raw amino-acid sequence, 37 residues long: Cytochrome b6-f complex subunit 5 (37 aa).

A helical transmembrane segment spans residues 5–25 (LLDGLVLGLVFATLGGLFYAA).

The protein belongs to the PetG family. As to quaternary structure, the 4 large subunits of the cytochrome b6-f complex are cytochrome b6, subunit IV (17 kDa polypeptide, PetD), cytochrome f and the Rieske protein, while the 4 small subunits are PetG, PetL, PetM and PetN. The complex functions as a dimer.

The protein resides in the cellular thylakoid membrane. Component of the cytochrome b6-f complex, which mediates electron transfer between photosystem II (PSII) and photosystem I (PSI), cyclic electron flow around PSI, and state transitions. PetG is required for either the stability or assembly of the cytochrome b6-f complex. The chain is Cytochrome b6-f complex subunit 5 from Mastigocladus laminosus (Fischerella sp.).